The primary structure comprises 173 residues: MKETIRIIGIDPGLRRTGWGIVESLGNSLHFIGSGTVTSNAEMDLASRLCQLHEGLSKVLHEFMPHEAAVEHTFVNKDATATLKLGQARGIALLAPAQAGLPVTEYAPNAVKKAVIGVGHGEKQQIHMMVKVLMPRASFDTSDAADALAIAICHAHHRQSIVSARRMQALLAG.

Active-site residues include Asp11, Glu71, and Asp143. Residues Asp11, Glu71, and Asp143 each coordinate Mg(2+).

This sequence belongs to the RuvC family. Homodimer which binds Holliday junction (HJ) DNA. The HJ becomes 2-fold symmetrical on binding to RuvC with unstacked arms; it has a different conformation from HJ DNA in complex with RuvA. In the full resolvosome a probable DNA-RuvA(4)-RuvB(12)-RuvC(2) complex forms which resolves the HJ. Requires Mg(2+) as cofactor.

It localises to the cytoplasm. It carries out the reaction Endonucleolytic cleavage at a junction such as a reciprocal single-stranded crossover between two homologous DNA duplexes (Holliday junction).. In terms of biological role, the RuvA-RuvB-RuvC complex processes Holliday junction (HJ) DNA during genetic recombination and DNA repair. Endonuclease that resolves HJ intermediates. Cleaves cruciform DNA by making single-stranded nicks across the HJ at symmetrical positions within the homologous arms, yielding a 5'-phosphate and a 3'-hydroxyl group; requires a central core of homology in the junction. The consensus cleavage sequence is 5'-(A/T)TT(C/G)-3'. Cleavage occurs on the 3'-side of the TT dinucleotide at the point of strand exchange. HJ branch migration catalyzed by RuvA-RuvB allows RuvC to scan DNA until it finds its consensus sequence, where it cleaves and resolves the cruciform DNA. The sequence is that of Crossover junction endodeoxyribonuclease RuvC from Brucella suis (strain ATCC 23445 / NCTC 10510).